Consider the following 398-residue polypeptide: 2-epi-5-epi-valiolone synthase (398 aa).

NAD(+)-binding positions include Asp-62, 93–96 (ETVK), 126–130 (GVLMD), 150–151 (TT), Lys-163, Lys-172, and 190–193 (FLAT). The active site involves Lys-163. A divalent metal cation contacts are provided by Glu-205, His-276, and His-292.

Belongs to the sugar phosphate cyclases superfamily. EEVS family. Requires NAD(+) as cofactor. Co(2+) is required as a cofactor.

The enzyme catalyses D-sedoheptulose 7-phosphate = 2-epi-5-epi-valiolone + phosphate. In terms of biological role, catalyzes the cyclization of D-sedoheptulose 7-phosphate to 2-epi-5-epi-valiolone. Does not use ido-heptulose 7-phosphate and 3-deoxy-arabino-heptulosonate 7-phosphate. Involved in the biosynthesis of the acarviose moiety of the alpha-glucosidase inhibitor acarbose. The sequence is that of 2-epi-5-epi-valiolone synthase from Actinoplanes sp. (strain ATCC 31044 / CBS 674.73 / SE50/110).